The chain runs to 242 residues: Large ribosomal subunit protein uL2 (242 aa).

The tract at residues 201 to 242 (VDHPFGGGRHQHTGKPTTVSRKKVPPGRKVGHISARRTGVRK) is disordered. A compositionally biased stretch (basic residues) spans 220 to 242 (SRKKVPPGRKVGHISARRTGVRK).

Belongs to the universal ribosomal protein uL2 family. In terms of assembly, part of the 50S ribosomal subunit. Forms a bridge to the 30S subunit in the 70S ribosome.

Its function is as follows. One of the primary rRNA binding proteins. Required for association of the 30S and 50S subunits to form the 70S ribosome, for tRNA binding and peptide bond formation. It has been suggested to have peptidyltransferase activity; this is somewhat controversial. Makes several contacts with the 16S rRNA in the 70S ribosome. The sequence is that of Large ribosomal subunit protein uL2 from Methanocaldococcus jannaschii (strain ATCC 43067 / DSM 2661 / JAL-1 / JCM 10045 / NBRC 100440) (Methanococcus jannaschii).